The primary structure comprises 359 residues: Protein Wnt-5b (359 aa).

The first 17 residues, 1 to 17, serve as a signal peptide directing secretion; it reads MPSLLLVVVAALLSSWA. Residues cysteine 83 and cysteine 94 are joined by a disulfide bond. Residues asparagine 93 and asparagine 99 are each glycosylated (N-linked (GlcNAc...) asparagine). Intrachain disulfides connect cysteine 133–cysteine 141, cysteine 143–cysteine 161, cysteine 217–cysteine 231, cysteine 219–cysteine 226, cysteine 288–cysteine 319, cysteine 304–cysteine 314, cysteine 318–cysteine 358, cysteine 334–cysteine 349, cysteine 336–cysteine 346, and cysteine 341–cysteine 342. The O-palmitoleoyl serine; by PORCN moiety is linked to residue serine 223. N-linked (GlcNAc...) asparagine glycans are attached at residues asparagine 291 and asparagine 305.

Belongs to the Wnt family. As to quaternary structure, interacts with PORCN. In terms of processing, palmitoleoylation is required for efficient binding to frizzled receptors. Depalmitoleoylation leads to Wnt signaling pathway inhibition.

It localises to the secreted. The protein localises to the extracellular space. The protein resides in the extracellular matrix. Ligand for members of the frizzled family of seven transmembrane receptors. Probable developmental protein. May be a signaling molecule which affects the development of discrete regions of tissues. Is likely to signal over only few cell diameters. The chain is Protein Wnt-5b (Wnt5b) from Mus musculus (Mouse).